Here is a 127-residue protein sequence, read N- to C-terminus: Holo-[acyl-carrier-protein] synthase (127 aa).

Mg(2+) contacts are provided by aspartate 8 and glutamate 56.

Belongs to the P-Pant transferase superfamily. AcpS family. Mg(2+) serves as cofactor.

Its subcellular location is the cytoplasm. It catalyses the reaction apo-[ACP] + CoA = holo-[ACP] + adenosine 3',5'-bisphosphate + H(+). Its function is as follows. Transfers the 4'-phosphopantetheine moiety from coenzyme A to a Ser of acyl-carrier-protein. The protein is Holo-[acyl-carrier-protein] synthase of Cytophaga hutchinsonii (strain ATCC 33406 / DSM 1761 / CIP 103989 / NBRC 15051 / NCIMB 9469 / D465).